The chain runs to 121 residues: uncharacterized protein (121 aa).

This is an uncharacterized protein from Caenorhabditis elegans.